The chain runs to 318 residues: Bis(5'-nucleosyl)-tetraphosphatase, symmetrical (318 aa).

Residues 269–318 (PGREVTGPAPVARAPRRPRERLGRQRSRGNRGNAGNTAVPAKPQVDTPQD) are disordered. Residues 282–297 (APRRPRERLGRQRSRG) show a composition bias toward basic residues.

It belongs to the Ap4A hydrolase family.

The catalysed reaction is P(1),P(4)-bis(5'-adenosyl) tetraphosphate + H2O = 2 ADP + 2 H(+). Hydrolyzes diadenosine 5',5'''-P1,P4-tetraphosphate to yield ADP. The chain is Bis(5'-nucleosyl)-tetraphosphatase, symmetrical from Xanthomonas oryzae pv. oryzae (strain KACC10331 / KXO85).